We begin with the raw amino-acid sequence, 316 residues long: Aspartate carbamoyltransferase catalytic subunit (316 aa).

Carbamoyl phosphate contacts are provided by arginine 66 and threonine 67. L-aspartate is bound at residue lysine 94. Residues arginine 116, histidine 146, and glutamine 149 each contribute to the carbamoyl phosphate site. Residues arginine 180 and arginine 235 each coordinate L-aspartate. Carbamoyl phosphate-binding residues include glycine 276 and proline 277.

The protein belongs to the aspartate/ornithine carbamoyltransferase superfamily. ATCase family. As to quaternary structure, heterododecamer (2C3:3R2) of six catalytic PyrB chains organized as two trimers (C3), and six regulatory PyrI chains organized as three dimers (R2).

The catalysed reaction is carbamoyl phosphate + L-aspartate = N-carbamoyl-L-aspartate + phosphate + H(+). It functions in the pathway pyrimidine metabolism; UMP biosynthesis via de novo pathway; (S)-dihydroorotate from bicarbonate: step 2/3. Its function is as follows. Catalyzes the condensation of carbamoyl phosphate and aspartate to form carbamoyl aspartate and inorganic phosphate, the committed step in the de novo pyrimidine nucleotide biosynthesis pathway. The sequence is that of Aspartate carbamoyltransferase catalytic subunit from Stenotrophomonas maltophilia (strain K279a).